The following is a 433-amino-acid chain: Myricetin 3-O-glucosyl 1,2-rhamnoside 6'-O-caffeoyltransferase AT1 (433 aa).

Catalysis depends on proton acceptor residues His-157 and Asp-375.

Belongs to the plant acyltransferase family. As to expression, expressed in young cromes.

The enzyme catalyses myricetin 3-O-[beta-D-glucosyl-(1-&gt;2)-alpha-L-rhamnoside] + (E)-caffeoyl-CoA = myricetin 3-O-[(6-O-(E)-caffeoyl-beta-D-glucosyl)-(1-&gt;2)-alpha-L-rhamnoside] + CoA. Its pathway is flavonoid metabolism. Its function is as follows. Caffeoyltransferase involved in montbretin A (MbA) biosynthesis. Catalyzes the caffeoylation of myricetin 3-O-beta-D-glucosyl 1,2-alpha-L-rhamnoside (MRG) to produce myricetin 3-O-(6'-O-caffeoyl)-beta-D-glucosyl 1,2-alpha-L-rhamnoside (mini-MbA), a precursor of MbA. Mini-MbA and MbA are potent inhibitors of human pancreatic alpha-amylase and are being developed as drug candidates to treat type-2 diabetes. In vitro, is able to catalyze the caffeoylation of quercetin 3-O-sophoroside (QGG), although QGG may not be a physiological substrate in vivo. In vitro, can use coumaryl-CoA, feruloyl-CoA and acetyl-CoA, although these three acyl donors may not be physiological in vivo. This chain is Myricetin 3-O-glucosyl 1,2-rhamnoside 6'-O-caffeoyltransferase AT1, found in Crocosmia x crocosmiiflora (Montbretia).